Consider the following 2069-residue polypeptide: Dedicator of cytokinesis protein 9 (2069 aa).

A phosphoserine mark is found at S21, S32, S167, and S170. The PH domain maps to 174–281 (GITKHGWLYK…WITILNKILQ (108 aa)). The disordered stretch occupies residues 290–313 (EKRNGDSHEDDEQSKLEGSGSGLD). 2 positions are modified to phosphoserine: S433 and S443. Residues 640–818 (TNHLYVYPKY…PLLKISTHLV (179 aa)) form the C2 DOCK-type domain. S927 and S1235 each carry phosphoserine. T1241 is modified (phosphothreonine). Residues 1241 to 1282 (TPNINSVRNADSRGSLISTDSGNSLPERNSEKSNSLDKHQQS) form a disordered region. 3 positions are modified to phosphoserine: S1255, S1261, and S1264. Residues 1255–1267 (SLISTDSGNSLPE) are compositionally biased toward polar residues. A compositionally biased stretch (basic and acidic residues) spans 1268-1280 (RNSEKSNSLDKHQ). The region spanning 1605–2069 (KSYASTPELR…LSEIMHEQLG (465 aa)) is the DOCKER domain. The interval 1693–2069 (DEEASMMEDV…LSEIMHEQLG (377 aa)) is interaction with CDC42. Coiled coils occupy residues 1948-1982 (IEVAIDEMSKKVAELRQLCSSAEVDMIKLQLKLQG) and 2034-2067 (NERLIKEDQLEYQEEMKANYREMAKELSEIMHEQ).

It belongs to the DOCK family. In terms of assembly, homodimer. Interacts preferentially with nucleotide-depleted CDC42. Widely expressed, with highest expression in heart and placenta. Expressed at intermediate level in kidney, brain, lung and skeletal muscle.

It localises to the endomembrane system. In terms of biological role, guanine nucleotide-exchange factor (GEF) that activates CDC42 by exchanging bound GDP for free GTP. Overexpression induces filopodia formation. The protein is Dedicator of cytokinesis protein 9 of Homo sapiens (Human).